The following is a 679-amino-acid chain: Altered inheritance of mitochondria protein 21 (679 aa).

The disordered stretch occupies residues 1–85; the sequence is MPSEVTPKVP…LQRPVRRSTT (85 aa). Residues 9-19 show a composition bias toward basic and acidic residues; that stretch reads VPERPSRRKTS. Position 18 is a phosphothreonine (T18). At S36 the chain carries Phosphoserine. T58 carries the phosphothreonine modification. S70 bears the Phosphoserine mark. A Phosphothreonine modification is found at T85. Position 104 is a phosphoserine (S104). Over residues 110 to 119 the composition is skewed to basic residues; that stretch reads NIHNVSRKKS. Disordered stretches follow at residues 110-522, 549-580, and 593-679; these read NIHN…EKIE, IDTT…PNKM, and EKLP…FHSL. Polar residues-rich tracts occupy residues 133-149 and 164-178; these read QNGQ…TNPS and SAIS…SNNE. Residues 179-213 are compositionally biased toward basic and acidic residues; the sequence is VTEHSDSEDLTEKQKVHAALDNEAGDRSHFEEKLI. Phosphoserine is present on residues S183, S206, and S231. The span at 243–272 shows a compositional bias: basic and acidic residues; that stretch reads SDDKAEKFTKHPESSLEELQKHQEQQEEKI. T277 carries the phosphothreonine modification. Residue S284 is modified to Phosphoserine. Residues 296 to 323 are compositionally biased toward polar residues; it reads EVNSQPQGPSDTETVIAATSSNVPSQIA. S324 bears the Phosphoserine mark. Composition is skewed to basic and acidic residues over residues 339-361 and 372-383; these read KKDF…RVSE and EESKIPKIPSER. Residues 383-396 are interaction with SH3 domain of ABP1; the sequence is RPKRRAPPPVPKKP. Composition is skewed to polar residues over residues 414–427 and 437–452; these read DLHN…TTAS and SSIT…TSKL. Basic and acidic residues predominate over residues 471-482; the sequence is LEKKLSSPDTES. Over residues 501–512 the composition is skewed to basic residues; sequence RRGRGPRGRKLP. Residue T552 is modified to Phosphothreonine. The span at 556–576 shows a compositional bias: basic and acidic residues; the sequence is QAERALDEKSKSIPEEQREQS. S576 is modified (phosphoserine). Residues 603–613 are compositionally biased toward polar residues; sequence PLSQLPQTNAV. 8 positions are modified to phosphoserine: S620, S623, S625, S627, S667, S671, S675, and S678. A compositionally biased stretch (basic and acidic residues) spans 667–679; the sequence is SALHSEEASFHSL.

Belongs to the AIM21 family. In terms of assembly, interacts with ribosomes. Interacts with ABP1.

It localises to the cytoplasm. It is found in the cytoskeleton. Its subcellular location is the actin patch. In terms of biological role, involved in mitochondrial migration along actin filaments. The protein is Altered inheritance of mitochondria protein 21 (AIM21) of Saccharomyces cerevisiae (strain ATCC 204508 / S288c) (Baker's yeast).